A 572-amino-acid polypeptide reads, in one-letter code: Sorting nexin 2B (572 aa).

Disordered stretches follow at residues methionine 1 to leucine 97 and serine 114 to serine 136. Residues glutamate 9–proline 30 show a composition bias toward basic and acidic residues. Positions threonine 32 to phenylalanine 53 are enriched in polar residues. Positions serine 124–serine 136 are enriched in low complexity. At serine 133 the chain carries Phosphoserine. One can recognise a PX domain in the interval serine 147–leucine 266. Positions 190, 216, and 233 each coordinate a 1,2-diacyl-sn-glycero-3-phospho-(1D-myo-inositol-3-phosphate). Positions leucine 318 to serine 572 constitute a BAR domain.

The protein belongs to the sorting nexin family. As to quaternary structure, homodimer. Heterodimer with SNX1 or SNX2B. Component of the retromer complex which consists of VPS29 (MAG1), VPS26 (VPS26A or VPS26B), VPS35 (VPS35A or VPS35B or VPS35C), VPS5/17 (SNX1 or SNX2A or SNX2B). Ubiquitously expressed.

Its subcellular location is the cytoplasm. The protein localises to the endosome membrane. The protein resides in the prevacuolar compartment membrane. It is found in the golgi apparatus. It localises to the trans-Golgi network membrane. Functionally, plays a role in vesicular protein sorting. Acts at the crossroads between the secretory and endocytic pathways. Is involved in the endosome to vacuole protein transport and, as component of the membrane-associated retromer complex, is also involved in endosome-to-Golgi retrograde transport. The chain is Sorting nexin 2B (SNX2B) from Arabidopsis thaliana (Mouse-ear cress).